Reading from the N-terminus, the 121-residue chain is Ribosome-binding factor A (121 aa).

It belongs to the RbfA family. Monomer. Binds 30S ribosomal subunits, but not 50S ribosomal subunits or 70S ribosomes.

The protein resides in the cytoplasm. One of several proteins that assist in the late maturation steps of the functional core of the 30S ribosomal subunit. Associates with free 30S ribosomal subunits (but not with 30S subunits that are part of 70S ribosomes or polysomes). Required for efficient processing of 16S rRNA. May interact with the 5'-terminal helix region of 16S rRNA. In Agathobacter rectalis (strain ATCC 33656 / DSM 3377 / JCM 17463 / KCTC 5835 / VPI 0990) (Eubacterium rectale), this protein is Ribosome-binding factor A.